The primary structure comprises 310 residues: p-hydroxybenzoic acid efflux pump subunit AaeA (310 aa).

Residues 12–32 (AITVVLVILAFIAIFNAWVYY) traverse the membrane as a helical segment.

Belongs to the membrane fusion protein (MFP) (TC 8.A.1) family.

It is found in the cell inner membrane. Its function is as follows. Forms an efflux pump with AaeB. This is p-hydroxybenzoic acid efflux pump subunit AaeA from Escherichia coli O127:H6 (strain E2348/69 / EPEC).